A 106-amino-acid chain; its full sequence is Protein RnfH (106 aa).

The protein belongs to the UPF0125 (RnfH) family.

The sequence is that of Protein RnfH from Ectopseudomonas mendocina (strain ymp) (Pseudomonas mendocina).